The primary structure comprises 320 residues: tRNA-cytidine(32) 2-sulfurtransferase (320 aa).

Residues Ser-54–Ser-59 carry the PP-loop motif motif. [4Fe-4S] cluster is bound by residues Cys-129, Cys-132, and Cys-220.

This sequence belongs to the TtcA family. Homodimer. Mg(2+) is required as a cofactor. Requires [4Fe-4S] cluster as cofactor.

The protein resides in the cytoplasm. It carries out the reaction cytidine(32) in tRNA + S-sulfanyl-L-cysteinyl-[cysteine desulfurase] + AH2 + ATP = 2-thiocytidine(32) in tRNA + L-cysteinyl-[cysteine desulfurase] + A + AMP + diphosphate + H(+). The protein operates within tRNA modification. In terms of biological role, catalyzes the ATP-dependent 2-thiolation of cytidine in position 32 of tRNA, to form 2-thiocytidine (s(2)C32). The sulfur atoms are provided by the cysteine/cysteine desulfurase (IscS) system. The protein is tRNA-cytidine(32) 2-sulfurtransferase of Bordetella parapertussis (strain 12822 / ATCC BAA-587 / NCTC 13253).